We begin with the raw amino-acid sequence, 373 residues long: UDP-3-O-acylglucosamine N-acyltransferase 2 (373 aa).

Histidine 257 serves as the catalytic Proton acceptor. The disordered stretch occupies residues aspartate 346 to serine 373. Low complexity predominate over residues alanine 350 to alanine 362.

This sequence belongs to the transferase hexapeptide repeat family. LpxD subfamily. As to quaternary structure, homotrimer.

The enzyme catalyses a UDP-3-O-[(3R)-3-hydroxyacyl]-alpha-D-glucosamine + a (3R)-hydroxyacyl-[ACP] = a UDP-2-N,3-O-bis[(3R)-3-hydroxyacyl]-alpha-D-glucosamine + holo-[ACP] + H(+). Its pathway is bacterial outer membrane biogenesis; LPS lipid A biosynthesis. Functionally, catalyzes the N-acylation of UDP-3-O-acylglucosamine using 3-hydroxyacyl-ACP as the acyl donor. Is involved in the biosynthesis of lipid A, a phosphorylated glycolipid that anchors the lipopolysaccharide to the outer membrane of the cell. The chain is UDP-3-O-acylglucosamine N-acyltransferase 2 from Rhodopseudomonas palustris (strain BisB18).